Here is a 214-residue protein sequence, read N- to C-terminus: Pyridoxine/pyridoxamine 5'-phosphate oxidase (214 aa).

Substrate is bound by residues 9 to 12 and Lys-67; that span reads RKNY. Residues 62 to 67, 77 to 78, Lys-83, Lys-84, and Gln-106 contribute to the FMN site; these read RIVLLK and YT. Residues Tyr-124, Arg-128, and Ser-132 each contribute to the substrate site. Residues 141–142 and Trp-186 each bind FMN; that span reads QS. 192 to 194 is a binding site for substrate; that stretch reads RLH. Residue Arg-196 participates in FMN binding.

The protein belongs to the pyridoxamine 5'-phosphate oxidase family. In terms of assembly, homodimer. FMN is required as a cofactor.

It carries out the reaction pyridoxamine 5'-phosphate + O2 + H2O = pyridoxal 5'-phosphate + H2O2 + NH4(+). It catalyses the reaction pyridoxine 5'-phosphate + O2 = pyridoxal 5'-phosphate + H2O2. The protein operates within cofactor metabolism; pyridoxal 5'-phosphate salvage; pyridoxal 5'-phosphate from pyridoxamine 5'-phosphate: step 1/1. It participates in cofactor metabolism; pyridoxal 5'-phosphate salvage; pyridoxal 5'-phosphate from pyridoxine 5'-phosphate: step 1/1. Catalyzes the oxidation of either pyridoxine 5'-phosphate (PNP) or pyridoxamine 5'-phosphate (PMP) into pyridoxal 5'-phosphate (PLP). The sequence is that of Pyridoxine/pyridoxamine 5'-phosphate oxidase from Leptospira borgpetersenii serovar Hardjo-bovis (strain JB197).